A 243-amino-acid chain; its full sequence is Probable transcriptional regulatory protein LCA_1307 (243 aa).

The tract at residues 1–21 is disordered; that stretch reads MSGHSKWHNIQGRKNAQDAKR.

Belongs to the TACO1 family.

The protein resides in the cytoplasm. The polypeptide is Probable transcriptional regulatory protein LCA_1307 (Latilactobacillus sakei subsp. sakei (strain 23K) (Lactobacillus sakei subsp. sakei)).